The sequence spans 253 residues: Ras-like protein family member 11A-like (253 aa).

GTP-binding positions include 43–50 (GASNVGKT), 90–97 (DTPCVSLQ), and 157–160 (NKSD). Positions 213 to 233 (GNGEKRKGGLHLARPKSPNMQ) are disordered.

This sequence belongs to the small GTPase superfamily. Ras family.

The protein localises to the nucleus. It localises to the nucleolus. It carries out the reaction GTP + H2O = GDP + phosphate + H(+). Functionally, regulator of rDNA transcription. The sequence is that of Ras-like protein family member 11A-like from Danio rerio (Zebrafish).